Here is a 324-residue protein sequence, read N- to C-terminus: ATP-dependent 6-phosphofructokinase (324 aa).

Residue Gly-15 participates in ATP binding. 25 to 29 (RGVVR) lines the ADP pocket. Residues 76 to 77 (RF) and 106 to 109 (GDGS) contribute to the ATP site. Asp-107 is a binding site for Mg(2+). 130–132 (TID) is a substrate binding site. The active-site Proton acceptor is Asp-132. Arg-159 lines the ADP pocket. Residues Arg-167 and 174 to 176 (MGR) contribute to the substrate site. Residues 190–192 (GCE), Lys-216, and 218–220 (KRH) contribute to the ADP site. Substrate contacts are provided by residues Glu-227, Arg-248, and 254–257 (HIQR).

It belongs to the phosphofructokinase type A (PFKA) family. ATP-dependent PFK group I subfamily. Prokaryotic clade 'B1' sub-subfamily. In terms of assembly, homotetramer. Mg(2+) is required as a cofactor.

The protein localises to the cytoplasm. The catalysed reaction is beta-D-fructose 6-phosphate + ATP = beta-D-fructose 1,6-bisphosphate + ADP + H(+). Its pathway is carbohydrate degradation; glycolysis; D-glyceraldehyde 3-phosphate and glycerone phosphate from D-glucose: step 3/4. Its activity is regulated as follows. Allosterically activated by ADP and other diphosphonucleosides, and allosterically inhibited by phosphoenolpyruvate. Catalyzes the phosphorylation of D-fructose 6-phosphate to fructose 1,6-bisphosphate by ATP, the first committing step of glycolysis. The chain is ATP-dependent 6-phosphofructokinase from Actinobacillus pleuropneumoniae serotype 5b (strain L20).